The primary structure comprises 180 residues: Shikimate kinase (180 aa).

An ATP-binding site is contributed by 14–19 (GAGKSS). Serine 18 is a binding site for Mg(2+). Substrate is bound by residues aspartate 36, arginine 60, and glycine 82. An ATP-binding site is contributed by arginine 120. Arginine 139 contacts substrate.

This sequence belongs to the shikimate kinase family. As to quaternary structure, monomer. It depends on Mg(2+) as a cofactor.

It is found in the cytoplasm. It carries out the reaction shikimate + ATP = 3-phosphoshikimate + ADP + H(+). It participates in metabolic intermediate biosynthesis; chorismate biosynthesis; chorismate from D-erythrose 4-phosphate and phosphoenolpyruvate: step 5/7. In terms of biological role, catalyzes the specific phosphorylation of the 3-hydroxyl group of shikimic acid using ATP as a cosubstrate. This is Shikimate kinase from Xylella fastidiosa (strain 9a5c).